The chain runs to 418 residues: Actin-related protein 3 (418 aa).

At Ala-2 the chain carries N-acetylalanine.

This sequence belongs to the actin family. ARP3 subfamily. In terms of assembly, component of the Arp2/3 complex composed of ACTR2/ARP2, ACTR3/ARP3, ARPC1B/p41-ARC, ARPC2/p34-ARC, ARPC3/p21-ARC, ARPC4/p20-ARC and ARPC5/p16-ARC. As to expression, detected in fibroblasts.

The protein localises to the cytoplasm. Its subcellular location is the cytoskeleton. It localises to the cell projection. It is found in the nucleus. Functionally, ATP-binding component of the Arp2/3 complex, a multiprotein complex that mediates actin polymerization upon stimulation by nucleation-promoting factor (NPF). The Arp2/3 complex mediates the formation of branched actin networks in the cytoplasm, providing the force for cell motility. Seems to contact the pointed end of the daughter actin filament. In addition to its role in the cytoplasmic cytoskeleton, the Arp2/3 complex also promotes actin polymerization in the nucleus, thereby regulating gene transcription and repair of damaged DNA. The Arp2/3 complex promotes homologous recombination (HR) repair in response to DNA damage by promoting nuclear actin polymerization, leading to drive motility of double-strand breaks (DSBs). The sequence is that of Actin-related protein 3 (ACTR3) from Gallus gallus (Chicken).